The chain runs to 302 residues: Heat stress transcription factor B-1 (302 aa).

Positions 1–15 (MAAAEAAAAVGKQQQ) are enriched in low complexity. Disordered regions lie at residues 1–33 (MAAAEAAAAVGKQQQKGGGGRGGGGGGPAPFLT) and 116–184 (GIRR…RKDN). The span at 16 to 28 (KGGGGRGGGGGGP) shows a compositional bias: gly residues. The span at 123–133 (TTPQSSKSCGS) shows a compositional bias: polar residues. Pro residues predominate over residues 139–150 (FPPPLPPLPPEP). The segment covering 151-172 (SATTSSGNDRSSSSASSPPRAD) has biased composition (low complexity). Residues 170 to 202 (RADITSENEQLRKDNQTLTMELARARRHCEELL) adopt a coiled-coil conformation. The hydrophobic repeat HR-A/B stretch occupies residues 180 to 209 (LRKDNQTLTMELARARRHCEELLGFLSRFL). A Nuclear export signal motif is present at residues 211-218 (VRQLDLRL). A Nuclear localization signal motif is present at residues 263-267 (RKRAR).

The protein belongs to the HSF family. Class B subfamily. In terms of assembly, homotrimer. Exhibits temperature-dependent phosphorylation.

The protein localises to the cytoplasm. It is found in the nucleus. In terms of biological role, transcriptional regulator that specifically binds DNA of heat shock promoter elements (HSE). The polypeptide is Heat stress transcription factor B-1 (HSFB1) (Oryza sativa subsp. japonica (Rice)).